We begin with the raw amino-acid sequence, 290 residues long: uncharacterized protein (290 aa).

Residues 1 to 61 (MVMNMNHLHI…RDKHHGLMLT (61 aa)) form the HTH lysR-type domain. The H-T-H motif DNA-binding region spans 20–39 (ITEAAKELFISQPAVSKAIK).

Belongs to the LysR transcriptional regulatory family.

This is an uncharacterized protein from Bacillus subtilis (strain 168).